We begin with the raw amino-acid sequence, 1085 residues long: Protein CROWDED NUCLEI 3 (1085 aa).

2 coiled-coil regions span residues 51 to 149 and 185 to 695; these read DEAS…NDLK and RERA…LDVL. Lysine 318 is covalently cross-linked (Glycyl lysine isopeptide (Lys-Gly) (interchain with G-Cter in ubiquitin)). Positions 404–411 match the Nuclear localization signal motif; the sequence is AKREAALE. Residue lysine 661 forms a Glycyl lysine isopeptide (Lys-Gly) (interchain with G-Cter in ubiquitin) linkage. A phosphoserine mark is found at serine 764, serine 787, serine 825, and serine 843. Disordered regions lie at residues 801 to 997 and 1020 to 1077; these read TVKL…GKAE and NNTG…SIGK. Over residues 813–825 the composition is skewed to basic and acidic residues; it reads SLDRVSGEDHEPS. The segment covering 854–868 has biased composition (basic residues); that stretch reads RRGRGRGRGRGKSVR. Basic and acidic residues predominate over residues 877-897; sequence VSRDSKPSDGETPRKRQREQT. A Phosphoserine modification is found at serine 910. Residues 932-941 are compositionally biased toward polar residues; that stretch reads VSQTPGQTRY. The span at 949–995 shows a compositional bias: basic and acidic residues; it reads VGTEEDKAQASKGATEKQERVNDDIRKVPSPKETRTPPEGENRENGK. Positions 1045–1066 are enriched in acidic residues; it reads EEDDENISMIEEENEGEEEEET.

The protein belongs to the CRWN family. As to quaternary structure, core component of the LINC complex which is composed of inner nuclear membrane SUN domain-containing proteins coupled to outer nuclear membrane WIP proteins, the nucleoskeletal CRWN/LINC proteins, and, possibly, KAKU4. As to expression, expressed at low levels in roots, leaves, flowers and flower stalks.

Its subcellular location is the nucleus membrane. The protein localises to the nucleus. It localises to the nucleoplasm. The protein resides in the cytoplasm. It is found in the nucleus lamina. Functionally, component of SUN-protein-containing multivariate complexes also called LINC complexes which link the nucleoskeleton and cytoskeleton by providing versatile outer nuclear membrane attachment sites for cytoskeletal filaments. Required for nucleus structure organization (e.g. size and shape). This chain is Protein CROWDED NUCLEI 3, found in Arabidopsis thaliana (Mouse-ear cress).